The chain runs to 359 residues: MTNFCNEWVSYSQMIKRFLSLMVLNTVCYQASALELNVYLWEDTIAPSVVEAWHKKTGVSVNLFHFDNDDERSLLMLKSVQLPFDIMVLDNVSAFIFSRQNVFEDLTALPNRANNDPMWLQACGTHAVPYFWGSVGIAYRKSLFDKPPTQWSEVVDIAPAHRGRVGMLKDSVETLLPALYMLNASPITDSIDTLRQAYRLLDAANPHILTYEYVLSYVRSHPQTDNLHMAVSYSGDHYSLNRFFNTQDWDFSVPEGRPYLWVDCMAVNSVSPNTVQAKAFLDFLMKPDIAAINAEYIRAASPNYKARALLPVEHREDLSIYLPEQRLAEGIIDSELSAKNLSLRAKIISSVTYQYEAKP.

An N-terminal signal peptide occupies residues 1-33; sequence MTNFCNEWVSYSQMIKRFLSLMVLNTVCYQASA.

The protein belongs to the bacterial solute-binding protein PotD/PotF family.

The protein resides in the periplasm. Its function is as follows. Acts as a sensor of norspermidine and enhances biofilm formation. When complexed to norspermidine, could interact with the periplasmic portion of MbaA to regulate its enzymatic activity. The chain is Norspermidine sensor (nspS) from Vibrio cholerae serotype O1 (strain ATCC 39315 / El Tor Inaba N16961).